A 371-amino-acid polypeptide reads, in one-letter code: Serine/threonine-protein kinase 17B (371 aa).

The 261-residue stretch at 33–293 (TLTPKELGRG…AESCLSHSWL (261 aa)) folds into the Protein kinase domain. Residues 39-47 (LGRGKFAVV) and Lys-62 each bind ATP. The active-site Proton acceptor is the Asp-158. The disordered stretch occupies residues 308 to 345 (SESSQTQDLSLRSSEDKTPKSCNGSCGDREDKENIPED). Positions 309-319 (ESSQTQDLSLR) are enriched in polar residues.

It belongs to the protein kinase superfamily. CAMK Ser/Thr protein kinase family. DAP kinase subfamily. Interacts with CHP1; the interaction induces CHP1 to translocate from the Golgi to the nucleus. Post-translationally, autophosphorylated. As to expression, highly expressed in thymus, spleen, and testis, lower levels present in the brain.

It is found in the nucleus. The protein localises to the cell membrane. Its subcellular location is the endoplasmic reticulum-Golgi intermediate compartment. The enzyme catalyses L-seryl-[protein] + ATP = O-phospho-L-seryl-[protein] + ADP + H(+). It catalyses the reaction L-threonyl-[protein] + ATP = O-phospho-L-threonyl-[protein] + ADP + H(+). Its function is as follows. Acts as a positive regulator of apoptosis. Phosphorylates myosin light chains. The chain is Serine/threonine-protein kinase 17B (Stk17b) from Rattus norvegicus (Rat).